A 700-amino-acid chain; its full sequence is non-specific serine/threonine protein kinase Cdc7 (700 aa).

Residues 127-644 (FDVHSRIGNG…AEEALKHPFF (518 aa)) enclose the Protein kinase domain. Residues 133 to 141 (IGNGTFSTV) and K163 each bind ATP. Residue D250 is the Proton acceptor of the active site.

It belongs to the protein kinase superfamily. Ser/Thr protein kinase family. In terms of assembly, component of the Dbf4-dependent kinase (DDK) complex consisting of Cdc7 and the Dbf4 ortholog chif. Interacts with chif (via the processed polypeptide Chiffon-A); the interaction is direct.

It catalyses the reaction L-seryl-[protein] + ATP = O-phospho-L-seryl-[protein] + ADP + H(+). The catalysed reaction is L-threonyl-[protein] + ATP = O-phospho-L-threonyl-[protein] + ADP + H(+). With respect to regulation, activated by chif. Inhibited by the synthetic compound XL413. Catalytic component of the Dbf4-dependent kinase (DDK) complex. Phosphorylates components of the pre-replication complex, including Mcm2 and, to a lesser extent, Mcm4. Phosphorylates histones, including H3 and H2B. Required for DNA replication and mitotic proliferation, including during the endoreplication and amplification stages of DNA replication in egg chamber follicle cells of the ovary. The chain is non-specific serine/threonine protein kinase Cdc7 from Drosophila melanogaster (Fruit fly).